Consider the following 129-residue polypeptide: Protein Turandot A2 (129 aa).

The signal sequence occupies residues 1 to 21 (MNSSTSLMCFALLLISPLCMG). Asn-49 is a glycosylation site (N-linked (GlcNAc...) asparagine).

It belongs to the Turandot family.

It localises to the secreted. In terms of biological role, a humoral factor that plays a role in stress tolerance; gives increased resistance to the lethal effects of bacterial challenge and stress. Regulated by the JAK/STAT pathway and NF-KB-like Relish pathway in the fat body, upd3 in the hemocytes and Mekk1 in response to septic injury and consequent immune response. This is Protein Turandot A2 (TotA2) from Drosophila simulans (Fruit fly).